A 393-amino-acid polypeptide reads, in one-letter code: MAVLKMTDLDLKGKRVLLREDLNVPLKDGKVTSDKRIRAALPSIEMALKAGARVLLVSHLGRPTEGEFDPAFSLAPVAEHLSRALGFQVPLVRDYIDGIEVAEGQCVLCENVRFLKGEKKDDEALGRKLAALCDIFVMDAFGAAHRAQASTHAAVRFAKVACAGPLLAAELDALSRALDAPAKPMVGIIGGSKVSTKLTLLDTLSKKVDRLIVGGGIANNFIKAAGHEVGRSLYEPELVDEAARLMAAARAAGGEIPVPVDVVVGPEFADSAPATVRKVSEVKPDEMILDIGPETAKLYRDILMQAGTIVWNGPVGAFEVEQFGQGTKALCMAVADSPAFSLAGGGDTVAAIEKYGVVDRISYMSTGGGAFLEFLEGKTLPAVAVLEERSSKG.

Residues 21–23 (DLN), arginine 36, 59–62 (HLGR), arginine 113, and arginine 146 contribute to the substrate site. Residues lysine 197, glutamate 319, and 345 to 348 (GGDT) contribute to the ATP site.

Belongs to the phosphoglycerate kinase family. In terms of assembly, monomer.

The protein resides in the cytoplasm. The enzyme catalyses (2R)-3-phosphoglycerate + ATP = (2R)-3-phospho-glyceroyl phosphate + ADP. The protein operates within carbohydrate degradation; glycolysis; pyruvate from D-glyceraldehyde 3-phosphate: step 2/5. This chain is Phosphoglycerate kinase, found in Nitratidesulfovibrio vulgaris (strain DSM 19637 / Miyazaki F) (Desulfovibrio vulgaris).